The sequence spans 440 residues: Xaa-Pro dipeptidase (440 aa).

The Mn(2+) site is built by Asp-244, Asp-255, His-335, Glu-380, and Glu-419.

Belongs to the peptidase M24B family. Bacterial-type prolidase subfamily. The cofactor is Mn(2+).

The catalysed reaction is Xaa-L-Pro dipeptide + H2O = an L-alpha-amino acid + L-proline. Functionally, splits dipeptides with a prolyl residue in the C-terminal position. The polypeptide is Xaa-Pro dipeptidase (Shewanella baltica (strain OS185)).